Here is a 209-residue protein sequence, read N- to C-terminus: Protein GrpE (209 aa).

Residues 1–18 (MKIFNKDGNKNSKEDTKA) show a composition bias toward basic and acidic residues. The disordered stretch occupies residues 1–60 (MKIFNKDGNKNSKEDTKAGAENSEAQNSGSSAEEVNKARENPEEASASSEAEKSPEVKCQ). A compositionally biased stretch (polar residues) spans 23-33 (SEAQNSGSSAE). The segment covering 50–60 (EAEKSPEVKCQ) has biased composition (basic and acidic residues).

This sequence belongs to the GrpE family. Homodimer.

It localises to the cytoplasm. In terms of biological role, participates actively in the response to hyperosmotic and heat shock by preventing the aggregation of stress-denatured proteins, in association with DnaK and GrpE. It is the nucleotide exchange factor for DnaK and may function as a thermosensor. Unfolded proteins bind initially to DnaJ; upon interaction with the DnaJ-bound protein, DnaK hydrolyzes its bound ATP, resulting in the formation of a stable complex. GrpE releases ADP from DnaK; ATP binding to DnaK triggers the release of the substrate protein, thus completing the reaction cycle. Several rounds of ATP-dependent interactions between DnaJ, DnaK and GrpE are required for fully efficient folding. This Methanosarcina barkeri (strain Fusaro / DSM 804) protein is Protein GrpE.